Reading from the N-terminus, the 152-residue chain is Transcriptional regulator MraZ (152 aa).

2 SpoVT-AbrB domains span residues 5–52 (ATLV…PLPE) and 81–124 (ASEC…DETT).

It belongs to the MraZ family. Forms oligomers.

Its subcellular location is the cytoplasm. The protein localises to the nucleoid. Negatively regulates its own expression and that of the subsequent genes in the proximal part of the division and cell wall (dcw) gene cluster. Acts by binding directly to DNA. May also regulate the expression of genes outside the dcw cluster. This chain is Transcriptional regulator MraZ, found in Salmonella typhi.